The sequence spans 181 residues: Large ribosomal subunit protein uL5 (181 aa).

Belongs to the universal ribosomal protein uL5 family. In terms of assembly, part of the 50S ribosomal subunit; part of the 5S rRNA/L5/L18/L25 subcomplex. Contacts the 5S rRNA and the P site tRNA. Forms a bridge to the 30S subunit in the 70S ribosome.

This is one of the proteins that bind and probably mediate the attachment of the 5S RNA into the large ribosomal subunit, where it forms part of the central protuberance. In the 70S ribosome it contacts protein S13 of the 30S subunit (bridge B1b), connecting the 2 subunits; this bridge is implicated in subunit movement. Contacts the P site tRNA; the 5S rRNA and some of its associated proteins might help stabilize positioning of ribosome-bound tRNAs. In Onion yellows phytoplasma (strain OY-M), this protein is Large ribosomal subunit protein uL5.